Here is a 437-residue protein sequence, read N- to C-terminus: Ribosomal protein uS12 methylthiotransferase RimO (437 aa).

Positions 3-118 (KKFYITTLGC…AGKILREKFP (116 aa)) constitute an MTTase N-terminal domain. The [4Fe-4S] cluster site is built by C12, C48, C81, C157, C161, and C164. Positions 143–370 (NYSKPYAYVK…RDSHLEILEE (228 aa)) constitute a Radical SAM core domain. The TRAM domain maps to 373–437 (ESRIGRTYDA…YEYDMNGTWV (65 aa)).

This sequence belongs to the methylthiotransferase family. RimO subfamily. It depends on [4Fe-4S] cluster as a cofactor.

It localises to the cytoplasm. It carries out the reaction L-aspartate(89)-[ribosomal protein uS12]-hydrogen + (sulfur carrier)-SH + AH2 + 2 S-adenosyl-L-methionine = 3-methylsulfanyl-L-aspartate(89)-[ribosomal protein uS12]-hydrogen + (sulfur carrier)-H + 5'-deoxyadenosine + L-methionine + A + S-adenosyl-L-homocysteine + 2 H(+). Functionally, catalyzes the methylthiolation of an aspartic acid residue of ribosomal protein uS12. The protein is Ribosomal protein uS12 methylthiotransferase RimO of Leptospira interrogans serogroup Icterohaemorrhagiae serovar Lai (strain 56601).